Here is a 242-residue protein sequence, read N- to C-terminus: 1-(5-phosphoribosyl)-5-[(5-phosphoribosylamino)methylideneamino] imidazole-4-carboxamide isomerase (242 aa).

Asp-10 (proton acceptor) is an active-site residue. The active-site Proton donor is Asp-132.

Belongs to the HisA/HisF family.

It is found in the cytoplasm. It catalyses the reaction 1-(5-phospho-beta-D-ribosyl)-5-[(5-phospho-beta-D-ribosylamino)methylideneamino]imidazole-4-carboxamide = 5-[(5-phospho-1-deoxy-D-ribulos-1-ylimino)methylamino]-1-(5-phospho-beta-D-ribosyl)imidazole-4-carboxamide. It participates in amino-acid biosynthesis; L-histidine biosynthesis; L-histidine from 5-phospho-alpha-D-ribose 1-diphosphate: step 4/9. This Streptococcus sanguinis (strain SK36) protein is 1-(5-phosphoribosyl)-5-[(5-phosphoribosylamino)methylideneamino] imidazole-4-carboxamide isomerase.